Reading from the N-terminus, the 712-residue chain is DNA ligase (712 aa).

Residues 1 to 22 (MVQKNEHQGGQSQHSLFAAGPT) form a disordered region. NAD(+) contacts are provided by residues 53–57 (DDQFD) and aspartate 138. Lysine 140 serves as the catalytic N6-AMP-lysine intermediate. Positions 161, 199, 318, and 342 each coordinate NAD(+). Zn(2+)-binding residues include cysteine 436, cysteine 439, cysteine 454, and cysteine 459. The segment at 612–631 (RGGRSGGGSSGSTGEGGLAS) is disordered. A compositionally biased stretch (gly residues) spans 614–630 (GRSGGGSSGSTGEGGLA). Positions 629–712 (LASGPLAGKN…MLREAKAASE (84 aa)) constitute a BRCT domain.

The protein belongs to the NAD-dependent DNA ligase family. LigA subfamily. Mg(2+) is required as a cofactor. Requires Mn(2+) as cofactor.

It catalyses the reaction NAD(+) + (deoxyribonucleotide)n-3'-hydroxyl + 5'-phospho-(deoxyribonucleotide)m = (deoxyribonucleotide)n+m + AMP + beta-nicotinamide D-nucleotide.. DNA ligase that catalyzes the formation of phosphodiester linkages between 5'-phosphoryl and 3'-hydroxyl groups in double-stranded DNA using NAD as a coenzyme and as the energy source for the reaction. It is essential for DNA replication and repair of damaged DNA. This chain is DNA ligase, found in Desulfovibrio desulfuricans (strain ATCC 27774 / DSM 6949 / MB).